Reading from the N-terminus, the 469-residue chain is Sulfate adenylyltransferase subunit 1 (469 aa).

The tr-type G domain occupies 22 to 237; that stretch reads KEVLRFITCG…LEEVPVKSEE (216 aa). Residues 31 to 38 form a G1 region; the sequence is GSVDDGKS. A GTP-binding site is contributed by 31–38; sequence GSVDDGKS. Residues 89–93 form a G2 region; the sequence is GITID. Positions 110 to 113 are G3; that stretch reads DTPG. GTP contacts are provided by residues 110-114 and 165-168; these read DTPGH and NKMD. Residues 165–168 are G4; that stretch reads NKMD. A G5 region spans residues 202–204; that stretch reads SAK.

Belongs to the TRAFAC class translation factor GTPase superfamily. Classic translation factor GTPase family. CysN/NodQ subfamily. Heterodimer composed of CysD, the smaller subunit, and CysN.

The catalysed reaction is sulfate + ATP + H(+) = adenosine 5'-phosphosulfate + diphosphate. It functions in the pathway sulfur metabolism; hydrogen sulfide biosynthesis; sulfite from sulfate: step 1/3. Its function is as follows. With CysD forms the ATP sulfurylase (ATPS) that catalyzes the adenylation of sulfate producing adenosine 5'-phosphosulfate (APS) and diphosphate, the first enzymatic step in sulfur assimilation pathway. APS synthesis involves the formation of a high-energy phosphoric-sulfuric acid anhydride bond driven by GTP hydrolysis by CysN coupled to ATP hydrolysis by CysD. The sequence is that of Sulfate adenylyltransferase subunit 1 from Methylorubrum extorquens (strain PA1) (Methylobacterium extorquens).